The primary structure comprises 273 residues: Glutamate racemase (273 aa).

Residues 10-11 (DS) and 42-43 (YG) each bind substrate. Cysteine 73 acts as the Proton donor/acceptor in catalysis. 74–75 (NT) is a substrate binding site. The Proton donor/acceptor role is filled by cysteine 184. 185–186 (TH) contacts substrate.

This sequence belongs to the aspartate/glutamate racemases family.

It catalyses the reaction L-glutamate = D-glutamate. The protein operates within cell wall biogenesis; peptidoglycan biosynthesis. In terms of biological role, provides the (R)-glutamate required for cell wall biosynthesis. The polypeptide is Glutamate racemase (Desulforudis audaxviator (strain MP104C)).